The sequence spans 400 residues: Enoyl-[acyl-carrier-protein] reductase [NADH] (400 aa).

NAD(+) is bound by residues Phe74 to Glu75, Asp111 to Ala112, and Val139 to Ala140. Tyr225 provides a ligand contact to substrate. The active-site Proton donor is the Tyr235. NAD(+)-binding positions include Lys244 and Val273–Thr275.

Belongs to the TER reductase family. Monomer.

It catalyses the reaction a 2,3-saturated acyl-[ACP] + NAD(+) = a (2E)-enoyl-[ACP] + NADH + H(+). It participates in lipid metabolism; fatty acid biosynthesis. Involved in the final reduction of the elongation cycle of fatty acid synthesis (FAS II). Catalyzes the reduction of a carbon-carbon double bond in an enoyl moiety that is covalently linked to an acyl carrier protein (ACP). The sequence is that of Enoyl-[acyl-carrier-protein] reductase [NADH] from Psychromonas ingrahamii (strain DSM 17664 / CCUG 51855 / 37).